We begin with the raw amino-acid sequence, 1027 residues long: Fibril-forming collagen alpha chain (1027 aa).

Positions 1–12 (YRAGPRYIQAQV) are nonhelical region (N-terminal). Positions 1 to 1027 (YRAGPRYIQA…GPPGNSDYGA (1027 aa)) are disordered. The tract at residues 13 to 1023 (GPIGPRGPPG…PGPPGPPGNS (1011 aa)) is triple-helical region. The span at 17-26 (PRGPPGPPGS) shows a compositional bias: pro residues. A 4-hydroxyproline; partial mark is found at Pro21 and Pro24. 2 positions are modified to 4-hydroxyproline: Pro27 and Pro39. Pro53 carries the 3-hydroxyproline; partial modification. Pro54 carries the post-translational modification 4-hydroxyproline. Positions 63–72 (SGDDGRDGEP) are enriched in basic and acidic residues. Pro72 is subject to 4-hydroxyproline; partial. Over residues 73–91 (GPRGGIGPMGPRGAGGMPG) the composition is skewed to gly residues. 4-hydroxyproline occurs at positions 90 and 93. Lys96 and Lys108 each carry 5-hydroxylysine. Lys96 and Lys108 each carry an O-linked (Gal...) hydroxylysine glycan. A 4-hydroxyproline; partial mark is found at Pro123 and Pro128. Pro150 is modified (4-hydroxyproline). Pro161 bears the 3-hydroxyproline; partial mark. Residue Pro162 is modified to 4-hydroxyproline. Pro164 carries the 3-hydroxyproline; partial modification. 4 positions are modified to 4-hydroxyproline: Pro165, Pro174, Pro177, and Pro180. Residues 168 to 182 (IGSTGSPGFPGTPGS) are compositionally biased toward low complexity. 5-hydroxylysine is present on residues Lys183 and Lys192. Lys192 carries an O-linked (Gal...) hydroxylysine glycan. Pro207, Pro216, Pro219, Pro228, and Pro237 each carry 4-hydroxyproline. Over residues 227 to 249 (EPGASGESGLPGPSGFPGPRGMP) the composition is skewed to low complexity. 4-hydroxyproline; partial is present on Pro243. 2 positions are modified to 4-hydroxyproline: Pro249 and Pro255. The segment covering 259-268 (GAKGDGGPTG) has biased composition (gly residues). Residue Lys261 is modified to 5-hydroxylysine. O-linked (Gal...) hydroxylysine glycosylation occurs at Lys261. Residues Pro273 and Pro276 each carry the 4-hydroxyproline; partial modification. Lys279 carries the 5-hydroxylysine modification. Residue Lys279 is glycosylated (O-linked (Gal...) hydroxylysine). 3 positions are modified to 4-hydroxyproline; partial: Pro285, Pro291, and Pro303. Pro306, Pro312, Pro321, Pro327, and Pro339 each carry 4-hydroxyproline. Lys342 is subject to 5-hydroxylysine. Pro348 is modified (4-hydroxyproline; partial). Lys351 carries the 5-hydroxylysine; partial modification. A 4-hydroxyproline mark is found at Pro366, Pro372, and Pro375. Positions 380 to 396 (RPGKDGRPGIRGKDGKQ) are enriched in basic and acidic residues. Pro381 is modified (4-hydroxyproline; partial). Pro387 carries the 4-hydroxyproline modification. The segment covering 398-420 (EQGPQGPQGLAGLQGRAGPPGAR) has biased composition (low complexity). Pro416 bears the 3-hydroxyproline; partial mark. 4-hydroxyproline is present on residues Pro417, Pro423, Pro429, and Pro432. The segment covering 437–446 (EQGDAGKDGE) has biased composition (basic and acidic residues). Low complexity predominate over residues 447–480 (TGAAGPPGAAGPTGARGPPGPRGQQGFQGLAGAQ). 4-hydroxyproline is present on residues Pro453, Pro465, and Pro483. 4-hydroxyproline; partial is present on residues Pro500, Pro503, and Pro506. Gly residues predominate over residues 502-511 (GPAGPGGERG). A 4-hydroxyproline mark is found at Pro513 and Pro525. Low complexity predominate over residues 527 to 543 (ERGATGPAGPTGSPGVA). Pro533 and Pro536 each carry 4-hydroxyproline; partial. Pro540 bears the 4-hydroxyproline mark. Position 546 is a 5-hydroxylysine (Lys546). Pro551 carries the 3-hydroxyproline; partial modification. 4-hydroxyproline occurs at positions 552 and 561. A 5-hydroxylysine mark is found at Lys567 and Lys573. O-linked (Gal...) hydroxylysine glycosylation is present at Lys573. Positions 575–599 (SRGDIGPRGKAGERGKDGERGERGE) are enriched in basic and acidic residues. Pro603 bears the 4-hydroxyproline mark. 5-hydroxylysine is present on Lys612. Lys612 is a glycosylation site (O-linked (Gal...) hydroxylysine). Residue Pro621 is modified to 4-hydroxyproline; partial. 4-hydroxyproline is present on Pro627. Over residues 635 to 644 (PAGSQGIQGQ) the composition is skewed to low complexity. Pro645 carries the post-translational modification 4-hydroxyproline; partial. Pro647 bears the 3-hydroxyproline; partial mark. At Pro648 the chain carries 4-hydroxyproline. At Lys657 the chain carries 5-hydroxylysine. Residue Lys657 is glycosylated (O-linked (Gal...) hydroxylysine). Residues Pro663, Pro708, Pro711, Pro714, Pro717, and Pro723 each carry the 4-hydroxyproline modification. The segment covering 698–710 (ETGAQGEIGLPGS) has biased composition (low complexity). A compositionally biased stretch (pro residues) spans 714–726 (PGLPGPSGQPGPS). Lys738 carries the 5-hydroxylysine modification. O-linked (Gal...) hydroxylysine glycosylation occurs at Lys738. 2 positions are modified to 4-hydroxyproline: Pro744 and Pro759. Positions 750 to 771 (QGDRGSDGEPGRDGTKGERGED) are enriched in basic and acidic residues. The residue at position 765 (Lys765) is a 5-hydroxylysine. Lys765 is a glycosylation site (O-linked (Gal...) hydroxylysine). Pro773 bears the 3-hydroxyproline; partial mark. 4-hydroxyproline is present on residues Pro774, Pro783, and Pro792. Positions 802–814 (GPMGGQGMKGDGG) are enriched in gly residues. Lys810 carries the 5-hydroxylysine modification. Lys810 carries an O-linked (Gal...) hydroxylysine glycan. Position 815 is a 3-hydroxyproline; partial (Pro815). A 4-hydroxyproline mark is found at Pro816, Pro843, Pro849, Pro855, Pro861, Pro867, Pro888, Pro894, Pro903, and Pro915. Positions 828-848 (AGPQGPTGPSGQAGAPGQEGA) are enriched in low complexity. Residues 884–894 (QRGLPGAAGPP) show a composition bias toward low complexity. Low complexity predominate over residues 911-927 (PVGAPGSQGPAGIMGMK). 5-hydroxylysine is present on Lys927. A glycan (O-linked (Gal...) hydroxylysine) is linked at Lys927. At Lys933 the chain carries 5-hydroxylysine; partial. 2 positions are modified to 5-hydroxylysine: Lys936 and Lys939. Lys936 carries an O-linked (Gal...) hydroxylysine glycan. Low complexity predominate over residues 942 to 962 (TGLPGLQGLQGTPGHSGESGP). Pro945 is modified (4-hydroxyproline). Pro954 carries the post-translational modification 4-hydroxyproline; partial. 4-hydroxyproline is present on residues Pro963 and Pro966. The segment covering 973–982 (GEAGGRGSQG) has biased composition (gly residues). Over residues 983 to 1001 (PPGKDGQPGPSGRVGPRGP) the composition is skewed to low complexity. Residues Pro984 and Pro990 each carry the 4-hydroxyproline modification. 3-hydroxyproline; partial is present on Pro1010. Residues 1010-1020 (PPGPPGPPGPP) show a composition bias toward pro residues. Pro1011 carries the 4-hydroxyproline modification. 3-hydroxyproline; partial is present on Pro1013. Pro1014 carries the post-translational modification 4-hydroxyproline. 3-hydroxyproline; partial is present on Pro1016. Pro1017 is modified (4-hydroxyproline). Pro1019 is subject to 3-hydroxyproline; partial. Residue Pro1020 is modified to 4-hydroxyproline. Residues 1024 to 1027 (DYGA) form a nonhelical region (C-terminal) region.

Homotetramer.

Its subcellular location is the secreted. The protein resides in the extracellular space. It localises to the extracellular matrix. Fibril-forming collagen. This chain is Fibril-forming collagen alpha chain, found in Riftia pachyptila (Vent tube worm).